The primary structure comprises 362 residues: MATLSFRNVKKTYAGNVPVIHGIDMDVADGEFIVIVGPSGCGKSTLMRMVAGLETVTEGEILIDDKVVNTLEPAERDIAMVFQNYALYPHMSVFDNMAYGLKIRRLPKDEIRKRVEAAAQILELGKLLDRRPRALSGGQRQRVAMGRAIVREPKVFLFDEPLSNLDAKLRVAMRLEILKLHRRLNTTSLYVTHDQVEAMTLAHRMVVMYQGVPEQIGTPMEVFEKPASTFVAGFIGSPPMNLLEVAVGGDGIVHTSDGIALDISPLAVPQQVRGRKVVMGLRPEHMLLNAQGLAAEIEMIETLGSEQLVHGRCGKHMVVVRCSTRQFSETPARVGDTLTIGPDGRHPLHWFEADTGRRVEGL.

One can recognise an ABC transporter domain in the interval 4 to 235; the sequence is LSFRNVKKTY…PASTFVAGFI (232 aa). 37-44 serves as a coordination point for ATP; the sequence is GPSGCGKS.

Belongs to the ABC transporter superfamily. sn-glycerol-3-phosphate importer (TC 3.A.1.1.3) family. The complex is composed of two ATP-binding proteins (UgpC), two transmembrane proteins (UgpA and UgpE) and a solute-binding protein (UgpB).

The protein resides in the cell inner membrane. It catalyses the reaction sn-glycerol 3-phosphate(out) + ATP + H2O = sn-glycerol 3-phosphate(in) + ADP + phosphate + H(+). Functionally, part of the ABC transporter complex UgpBAEC involved in sn-glycerol-3-phosphate (G3P) import. Responsible for energy coupling to the transport system. This is sn-glycerol-3-phosphate import ATP-binding protein UgpC from Bordetella bronchiseptica (strain ATCC BAA-588 / NCTC 13252 / RB50) (Alcaligenes bronchisepticus).